Reading from the N-terminus, the 160-residue chain is Small ribosomal subunit protein uS7 (160 aa).

This sequence belongs to the universal ribosomal protein uS7 family. In terms of assembly, part of the 30S ribosomal subunit. Contacts proteins S9 and S11.

In terms of biological role, one of the primary rRNA binding proteins, it binds directly to 16S rRNA where it nucleates assembly of the head domain of the 30S subunit. Is located at the subunit interface close to the decoding center, probably blocks exit of the E-site tRNA. This chain is Small ribosomal subunit protein uS7, found in Rickettsia rickettsii (strain Iowa).